We begin with the raw amino-acid sequence, 85 residues long: UPF0512 protein U (85 aa).

The protein belongs to the UPF0512 family.

The sequence is that of UPF0512 protein U from Dictyostelium discoideum (Social amoeba).